The chain runs to 565 residues: Glucose starvation modulator protein 1 (565 aa).

Positions 20-48 (CVFCHQKHLQCSNERPCKNCVKRNIAHGC) form a DNA-binding region, zn(2)-C6 fungal-type. Disordered stretches follow at residues 63–106 (GVSG…ESSN) and 250–269 (QVSP…NTLS). A compositionally biased stretch (polar residues) spans 82 to 93 (SPLSTSMSPTDS). Residues 252 to 269 (SPSPSNTSTSENNTNTLS) are compositionally biased toward low complexity.

This sequence belongs to the ERT1/acuK family.

The protein localises to the nucleus. Functionally, transcription factor which regulates nonfermentable carbon utilization. The chain is Glucose starvation modulator protein 1 (GSM1) from Candida dubliniensis (strain CD36 / ATCC MYA-646 / CBS 7987 / NCPF 3949 / NRRL Y-17841) (Yeast).